The primary structure comprises 200 residues: Glycerol-3-phosphate acyltransferase (200 aa).

The next 5 helical transmembrane spans lie at 6-26 (LTLGMILAAYLAGSISSAVLV), 56-76 (SAAMVLFFDMLKGALPAYIAF), 82-102 (QVALGAIAIAACLGHIFPIFF), 118-138 (APIGHELALALMVTWIVMVLI), and 141-161 (YSSLAAITTAMLAPIYTWFLD).

The protein belongs to the PlsY family. In terms of assembly, probably interacts with PlsX.

It localises to the cell inner membrane. The catalysed reaction is an acyl phosphate + sn-glycerol 3-phosphate = a 1-acyl-sn-glycero-3-phosphate + phosphate. Its pathway is lipid metabolism; phospholipid metabolism. Functionally, catalyzes the transfer of an acyl group from acyl-phosphate (acyl-PO(4)) to glycerol-3-phosphate (G3P) to form lysophosphatidic acid (LPA). This enzyme utilizes acyl-phosphate as fatty acyl donor, but not acyl-CoA or acyl-ACP. This is Glycerol-3-phosphate acyltransferase from Shewanella sediminis (strain HAW-EB3).